Reading from the N-terminus, the 353-residue chain is Protein Wnt-11b-2 (353 aa).

Positions 1–22 are cleaved as a signal peptide; the sequence is MALIRHCVTLLLILCCSRLCGA. Residues Asn-31, Asn-38, and Asn-88 are each glycosylated (N-linked (GlcNAc...) asparagine). Intrachain disulfides connect Cys-78–Cys-89, Cys-128–Cys-136, Cys-138–Cys-155, Cys-208–Cys-222, and Cys-210–Cys-217. Ser-214 is lipidated: O-palmitoleoyl serine; by PORCN. Residues Tyr-274 and Tyr-281 each carry the sulfotyrosine modification. Intrachain disulfides connect Cys-282-Cys-313, Cys-298-Cys-308, Cys-312-Cys-352, Cys-328-Cys-343, Cys-330-Cys-340, and Cys-335-Cys-336. An N-linked (GlcNAc...) asparagine glycan is attached at Asn-299.

The protein belongs to the Wnt family. As to quaternary structure, homodimer. Secreted homodimers form a complex with wnt5a homodimers; tyrosine sulfation of both wnt11 and wnt5a by tpst1 is required for this interaction. Interacts with the transmembrane receptor fzd7/fz7. Interacts with lrp6 and ryk. Interacts with tdgf1/frl1. Interacts weakly with frzb1 and strongly with frzb2/crescent. Interaction with frzb2/crescent antagonizes wnt11 function in the neuroectoderm, but enhances it in mesodermal tissue. Post-translationally, glycosylation is required for protein secretion. In terms of processing, palmitoleoylation is required for efficient binding to frizzled receptors. Depalmitoleoylation leads to Wnt signaling pathway inhibition.

Its subcellular location is the secreted. It is found in the extracellular space. The protein localises to the extracellular matrix. In terms of biological role, ligand for the frizzled7 transmembrane receptor. Primarily acts via non-canonical Wnt pathways mediated by either Ca(2+) and PKC, or by JNK and dvl2/dsh. Depending on the cellular context, can also signal via the canonical Wnt pathway mediated by beta-catenin and dvl2/dsh. May also inhibit canonical Wnt signaling. Maternally initiates dorsal/ventral axis formation by a canonical route, which signals via lrp6. In a complex with wnt5a, activates the canonical and non-canonical processes involved in axis formation. In the non-canonical pathway, acts through fzd7/fz7 to induce phosphorylation of dvl2/dsh. Signals through a non-canonical Wnt pathway to regulate convergent extension movements during gastrulation. Interactions with the secreted Wnt antagonist sfrp5 to coordinate foregut development, acting via a non-canonical wnt pathway whereby sfrp5 restricts wnt11b activity to prevent inappropriate foregut formation. Mediates cardiogenesis via non-canonical Wnt signaling involving JNK-activation and PKC. Acts redundantly with wnt11/wnt11r during pronephros induction. This Xenopus tropicalis (Western clawed frog) protein is Protein Wnt-11b-2.